The following is a 518-amino-acid chain: Bifunctional purine biosynthesis protein PurH (518 aa).

The 144-residue stretch at 1–144 folds into the MGS-like domain; sequence MSKRALISVS…KNHAAVTVVC (144 aa).

Belongs to the PurH family.

It carries out the reaction (6R)-10-formyltetrahydrofolate + 5-amino-1-(5-phospho-beta-D-ribosyl)imidazole-4-carboxamide = 5-formamido-1-(5-phospho-D-ribosyl)imidazole-4-carboxamide + (6S)-5,6,7,8-tetrahydrofolate. It catalyses the reaction IMP + H2O = 5-formamido-1-(5-phospho-D-ribosyl)imidazole-4-carboxamide. The protein operates within purine metabolism; IMP biosynthesis via de novo pathway; 5-formamido-1-(5-phospho-D-ribosyl)imidazole-4-carboxamide from 5-amino-1-(5-phospho-D-ribosyl)imidazole-4-carboxamide (10-formyl THF route): step 1/1. It functions in the pathway purine metabolism; IMP biosynthesis via de novo pathway; IMP from 5-formamido-1-(5-phospho-D-ribosyl)imidazole-4-carboxamide: step 1/1. The sequence is that of Bifunctional purine biosynthesis protein PurH from Lactococcus lactis subsp. cremoris (strain SK11).